The sequence spans 184 residues: dCTP deaminase (184 aa).

Residues 107 to 112 (KSTYAR), 131 to 133 (TLE), Gln-152, Tyr-166, and Gln-176 each bind dCTP. The active-site Proton donor/acceptor is Glu-133.

Belongs to the dCTP deaminase family. In terms of assembly, homotrimer.

It catalyses the reaction dCTP + H2O + H(+) = dUTP + NH4(+). It participates in pyrimidine metabolism; dUMP biosynthesis; dUMP from dCTP (dUTP route): step 1/2. Its function is as follows. Catalyzes the deamination of dCTP to dUTP. The sequence is that of dCTP deaminase from Gemmatimonas aurantiaca (strain DSM 14586 / JCM 11422 / NBRC 100505 / T-27).